The chain runs to 658 residues: Staphylocoagulase (658 aa).

The signal sequence occupies residues 1 to 26 (MKKQIISLGALAVASSLFTWDNKADA). Composition is skewed to polar residues over residues 391 to 406 (MEQN…TQPT), 428 to 440 (GTES…QGES), 499 to 514 (PSET…QDGT), and 521 to 531 (PTQNKPSETNA). Residues 391-531 (MEQNRPSLSD…TQNKPSETNA (141 aa)) form a disordered region. A run of 6 repeats spans residues 492–518 (ARPR…VSYG), 519–545 (ARPT…VSYG), 546–572 (ARPT…VSYG), 573–599 (ARPT…VSYG), 600–626 (ARPT…VSYG), and 627–653 (ARPT…ATYG). Residues 492 to 653 (ARPRFNKPSE…THADGTATYG (162 aa)) form a 6 X 27 AA tandem repeats of A-R-P-[RT]-[FQY]-[NK]-K-P-S-[EK]-T-N-A-Y-N-V-T-T-[NH]-[QA]-[DN]-G-[TQ]-[VA]-[ST]-Y-G region. A disordered region spans residues 619-658 (ANGQVSYGARPTQKKPSETNAYNVTTHADGTATYGPRVTK). Positions 636–646 (ETNAYNVTTHA) are enriched in polar residues.

The protein belongs to the staphylocoagulase family.

Staphylocoagulase is an extracellular protein which specifically forms a complex with human prothrombin. This complex named staphylothrombin can clot fibrinogen without any proteolytic cleavage of prothrombin. This Staphylococcus aureus protein is Staphylocoagulase.